Here is a 505-residue protein sequence, read N- to C-terminus: MTEQKYIVALDQGTTSSRAVILDHDANIVSVAQREFTQIYPQAGWVEHDPMEIWATQSSTLVEALAKSGIRSDQLAAIGITNQRETTIVWNKETGKPVYNAIVWQCRRTADICEDLKSRGLEDYVRDNTGLVLDPYFSGTKVKWILDNVEGAREDAEAGKLLFGTVDTWLVWKMTQGRVHVTDYTNASRTMLFNINDLCWDQKLLDEMGIPASMMPEVKRSSEIYGKTNIGGKGGTRIPIAGIAGDQQAALYGQMCVEAGQAKNTYGTGCFLLMNTGQEKVTSKNGLLTTLACGPKGEPAYALEGAVFMGGASIQWLRDELKILNGAEDSEYFATKVDTSNGVYVVPAFTGLGAPYWDAYARGTIVGLTRGVNSNHIIRATLEGIAYQTRDVLDAMQADSGIKLANLRVDGGAVANNFLMQFQSDVLNTEVHRPQVTEVTALGAAYLAGLAVGYWNSIDELQDKAVLDRTFEPHDDEEKRNRRYKGWKRAVKCAQTWSELHDEDD.

Threonine 14 is a binding site for ADP. Threonine 14, threonine 15, and serine 16 together coordinate ATP. Threonine 14 contacts sn-glycerol 3-phosphate. Position 18 (arginine 18) interacts with ADP. Sn-glycerol 3-phosphate is bound by residues arginine 84, glutamate 85, tyrosine 136, and aspartate 246. The glycerol site is built by arginine 84, glutamate 85, tyrosine 136, aspartate 246, and glutamine 247. Threonine 268 and glycine 311 together coordinate ADP. ATP-binding residues include threonine 268, glycine 311, glutamine 315, and glycine 412. ADP contacts are provided by glycine 412 and asparagine 416.

It belongs to the FGGY kinase family.

The catalysed reaction is glycerol + ATP = sn-glycerol 3-phosphate + ADP + H(+). Its pathway is polyol metabolism; glycerol degradation via glycerol kinase pathway; sn-glycerol 3-phosphate from glycerol: step 1/1. Its activity is regulated as follows. Inhibited by fructose 1,6-bisphosphate (FBP). In terms of biological role, key enzyme in the regulation of glycerol uptake and metabolism. Catalyzes the phosphorylation of glycerol to yield sn-glycerol 3-phosphate. The protein is Glycerol kinase of Vibrio parahaemolyticus serotype O3:K6 (strain RIMD 2210633).